The following is a 139-amino-acid chain: Arsenate reductase (139 aa).

Residues C10, C82, and C89 each act as nucleophile in the active site. Intrachain disulfides connect C10/C82 and C82/C89.

The protein belongs to the low molecular weight phosphotyrosine protein phosphatase family. Thioredoxin-coupled ArsC subfamily.

Its subcellular location is the cytoplasm. It catalyses the reaction arsenate + [thioredoxin]-dithiol + H(+) = arsenite + [thioredoxin]-disulfide + H2O. Catalyzes the reduction of arsenate [As(V)] to arsenite [As(III)]. The polypeptide is Arsenate reductase (Halalkalibacterium halodurans (strain ATCC BAA-125 / DSM 18197 / FERM 7344 / JCM 9153 / C-125) (Bacillus halodurans)).